The following is a 406-amino-acid chain: 5-hydroxytryptamine receptor 4 (406 aa).

The Extracellular portion of the chain corresponds to 1-19 (MDRLDANVSSNEGFGSVEK). Residue Asn7 is glycosylated (N-linked (GlcNAc...) asparagine). A helical transmembrane segment spans residues 20–44 (VVLLTFFAMVILMAILGNLLVMVAV). Over 45-54 (CRDRQLRKIK) the chain is Cytoplasmic. Residues 55 to 78 (TNYFIVSLAFADLLVSVLVNAFGA) traverse the membrane as a helical segment. Over 79–92 (IELVQDIWFYGEMF) the chain is Extracellular. The helical transmembrane segment at 93–117 (CLVRTSLDVLLTTASIFHLCCISLD) threads the bilayer. An intrachain disulfide couples Cys93 to Cys184. Asp100 contributes to the serotonin binding site. The Cytoplasmic portion of the chain corresponds to 118 to 133 (RYYAICCQPLVYRNKM). The helical transmembrane segment at 134–157 (TPLRIALMLGGCWVIPMFISFLPI) threads the bilayer. Over 158–188 (MQGWNNIGIVDVIEKRKFNHNSNSTFCVFMV) the chain is Extracellular. A helical membrane pass occupies residues 189–212 (NKPYAITCSVVAFYIPFLLMVLAY). Residues 213 to 257 (YRIYVTAKEHAQQIQMLQRAGATSESRPQTADQHSTHRMRTETKA) are Cytoplasmic-facing. A helical transmembrane segment spans residues 258–283 (AKTLCVIMGCFCFCWAPFFVTNIVDP). Asn279 serves as a coordination point for serotonin. At 284 to 290 (FIDYTVP) the chain is on the extracellular side. A helical membrane pass occupies residues 291 to 314 (EKVWTAFLWLGYINSGLNPFLYAF). Residues 315-406 (LNKSFRRAFL…DSCSLKRSQS (92 aa)) lie on the Cytoplasmic side of the membrane.

It belongs to the G-protein coupled receptor 1 family. As to quaternary structure, interacts (via C-terminus 330-346 AA) with GRK5; this interaction is promoted by 5-HT (serotonin). In terms of tissue distribution, in brain, isoform 5-HT4S is restricted to the striatum. In peripheral tissues, differential expression is also observed in the atrium of the heart where only isoform 5-HT4S is detectable. As to expression, in brain, isoform 5-HT4L is expressed throughout the brain, except in the cerebellum.

The protein resides in the cell membrane. It is found in the endosome membrane. Its function is as follows. G-protein coupled receptor for 5-hydroxytryptamine (serotonin), a biogenic hormone that functions as a neurotransmitter, a hormone and a mitogen. Ligand binding causes a conformation change that triggers signaling via guanine nucleotide-binding proteins (G proteins) and modulates the activity of downstream effectors. HTR4 is coupled to G(s) G alpha proteins and mediates activation of adenylate cyclase activity. In Rattus norvegicus (Rat), this protein is 5-hydroxytryptamine receptor 4 (Htr4).